A 138-amino-acid chain; its full sequence is Gap junction alpha-4 protein (138 aa).

Topologically, residues 1-16 (DWGFLEKLLDQVQEHS) are cytoplasmic. The chain crosses the membrane as a helical span at residues 17–39 (TVVGKIWLTVLFIFRILILGLAG). Over 40-74 (ESVWGDEQSDFECNTAQPGCTNVCYDQAFPISHIP) the chain is Extracellular. A helical transmembrane segment spans residues 75–97 (YWVLQFLFVSTPTLVYLGHVIYL). The Cytoplasmic portion of the chain corresponds to 98 to 138 (SRREERLRQKEGELRALPDKDPRVERALAGIERQMAKISVA).

It belongs to the connexin family. Alpha-type (group II) subfamily. A connexon is composed of a hexamer of connexins.

It localises to the cell membrane. The protein resides in the cell junction. The protein localises to the gap junction. Functionally, one gap junction consists of a cluster of closely packed pairs of transmembrane channels, the connexons, through which materials of low MW diffuse from one cell to a neighboring cell. The polypeptide is Gap junction alpha-4 protein (GJA4) (Sus scrofa (Pig)).